A 38-amino-acid chain; its full sequence is Large ribosomal subunit protein bL36 (38 aa).

The protein belongs to the bacterial ribosomal protein bL36 family.

The chain is Large ribosomal subunit protein bL36 from Flavobacterium johnsoniae (strain ATCC 17061 / DSM 2064 / JCM 8514 / BCRC 14874 / CCUG 350202 / NBRC 14942 / NCIMB 11054 / UW101) (Cytophaga johnsonae).